The following is a 362-amino-acid chain: Phosphoserine aminotransferase (362 aa).

Arg-43 is a binding site for L-glutamate. Pyridoxal 5'-phosphate is bound by residues 77-78 (AT), Trp-103, Thr-153, Asp-173, and Gln-196. An N6-(pyridoxal phosphate)lysine modification is found at Lys-197. Residue 238 to 239 (NT) participates in pyridoxal 5'-phosphate binding.

The protein belongs to the class-V pyridoxal-phosphate-dependent aminotransferase family. SerC subfamily. Homodimer. Pyridoxal 5'-phosphate serves as cofactor.

The protein localises to the cytoplasm. The catalysed reaction is O-phospho-L-serine + 2-oxoglutarate = 3-phosphooxypyruvate + L-glutamate. It catalyses the reaction 4-(phosphooxy)-L-threonine + 2-oxoglutarate = (R)-3-hydroxy-2-oxo-4-phosphooxybutanoate + L-glutamate. It participates in amino-acid biosynthesis; L-serine biosynthesis; L-serine from 3-phospho-D-glycerate: step 2/3. It functions in the pathway cofactor biosynthesis; pyridoxine 5'-phosphate biosynthesis; pyridoxine 5'-phosphate from D-erythrose 4-phosphate: step 3/5. Its function is as follows. Catalyzes the reversible conversion of 3-phosphohydroxypyruvate to phosphoserine and of 3-hydroxy-2-oxo-4-phosphonooxybutanoate to phosphohydroxythreonine. This is Phosphoserine aminotransferase from Xylella fastidiosa (strain 9a5c).